A 449-amino-acid chain; its full sequence is tRNA modification GTPase MnmE (449 aa).

(6S)-5-formyl-5,6,7,8-tetrahydrofolate contacts are provided by arginine 24, glutamate 85, and arginine 124. The region spanning 220–369 (GIRTAIAGPP…LEEAIIQAFS (150 aa)) is the TrmE-type G domain. A K(+)-binding site is contributed by asparagine 230. GTP contacts are provided by residues 230-235 (NVGKSS), 249-255 (SNIAGTT), and 274-277 (DTAG). Serine 234 is a binding site for Mg(2+). Positions 249, 251, and 254 each coordinate K(+). Residue threonine 255 participates in Mg(2+) binding. Position 449 (lysine 449) interacts with (6S)-5-formyl-5,6,7,8-tetrahydrofolate.

It belongs to the TRAFAC class TrmE-Era-EngA-EngB-Septin-like GTPase superfamily. TrmE GTPase family. As to quaternary structure, homodimer. Heterotetramer of two MnmE and two MnmG subunits. K(+) serves as cofactor.

It is found in the cytoplasm. Functionally, exhibits a very high intrinsic GTPase hydrolysis rate. Involved in the addition of a carboxymethylaminomethyl (cmnm) group at the wobble position (U34) of certain tRNAs, forming tRNA-cmnm(5)s(2)U34. The protein is tRNA modification GTPase MnmE of Akkermansia muciniphila (strain ATCC BAA-835 / DSM 22959 / JCM 33894 / BCRC 81048 / CCUG 64013 / CIP 107961 / Muc).